Consider the following 273-residue polypeptide: Orotidine 5'-phosphate decarboxylase (273 aa).

The active-site Proton donor is lysine 96.

Belongs to the OMP decarboxylase family. Type 2 subfamily.

The enzyme catalyses orotidine 5'-phosphate + H(+) = UMP + CO2. It participates in pyrimidine metabolism; UMP biosynthesis via de novo pathway; UMP from orotate: step 2/2. The polypeptide is Orotidine 5'-phosphate decarboxylase (Nocardioides sp. (strain ATCC BAA-499 / JS614)).